We begin with the raw amino-acid sequence, 616 residues long: Dihydroxy-acid dehydratase (616 aa).

Residue aspartate 81 coordinates Mg(2+). Cysteine 122 contacts [2Fe-2S] cluster. Aspartate 123 and lysine 124 together coordinate Mg(2+). Position 124 is an N6-carboxylysine (lysine 124). Residue cysteine 195 participates in [2Fe-2S] cluster binding. Glutamate 491 is a binding site for Mg(2+). Serine 517 serves as the catalytic Proton acceptor.

The protein belongs to the IlvD/Edd family. In terms of assembly, homodimer. It depends on [2Fe-2S] cluster as a cofactor. Requires Mg(2+) as cofactor.

The catalysed reaction is (2R)-2,3-dihydroxy-3-methylbutanoate = 3-methyl-2-oxobutanoate + H2O. It carries out the reaction (2R,3R)-2,3-dihydroxy-3-methylpentanoate = (S)-3-methyl-2-oxopentanoate + H2O. Its pathway is amino-acid biosynthesis; L-isoleucine biosynthesis; L-isoleucine from 2-oxobutanoate: step 3/4. The protein operates within amino-acid biosynthesis; L-valine biosynthesis; L-valine from pyruvate: step 3/4. Its function is as follows. Functions in the biosynthesis of branched-chain amino acids. Catalyzes the dehydration of (2R,3R)-2,3-dihydroxy-3-methylpentanoate (2,3-dihydroxy-3-methylvalerate) into 2-oxo-3-methylpentanoate (2-oxo-3-methylvalerate) and of (2R)-2,3-dihydroxy-3-methylbutanoate (2,3-dihydroxyisovalerate) into 2-oxo-3-methylbutanoate (2-oxoisovalerate), the penultimate precursor to L-isoleucine and L-valine, respectively. This is Dihydroxy-acid dehydratase from Escherichia coli (strain 55989 / EAEC).